Here is a 203-residue protein sequence, read N- to C-terminus: Glutathione-specific gamma-glutamylcyclotransferase (203 aa).

Residue 12–17 (VFGYGS) coordinates substrate. Glu105 acts as the Proton acceptor in catalysis.

Belongs to the gamma-glutamylcyclotransferase family. ChaC subfamily.

It is found in the cytoplasm. The protein localises to the nucleus. It catalyses the reaction glutathione = L-cysteinylglycine + 5-oxo-L-proline. Functionally, gamma-glutamylcyclotransferase acting specifically on glutathione, but not on other gamma-glutamyl peptides. Allows utilization of gluthathione through subsequent cleavage of the Cys-Gly dipeptide by Cys-Gly metallodipeptidase dug1. This chain is Glutathione-specific gamma-glutamylcyclotransferase, found in Schizosaccharomyces pombe (strain 972 / ATCC 24843) (Fission yeast).